We begin with the raw amino-acid sequence, 375 residues long: Putative F-box protein At1g12190 (375 aa).

An F-box domain is found at 1-46 (MACVKFPWELMEEILYRVPSLSLSRFKTVSKEWNTLLNDKTFIKKH).

The protein is Putative F-box protein At1g12190 of Arabidopsis thaliana (Mouse-ear cress).